A 103-amino-acid chain; its full sequence is Histone H4 (103 aa).

Residues 1 to 14 show a composition bias toward gly residues; that stretch reads MTGRGKGGKGLGKG. The segment at 1–20 is disordered; it reads MTGRGKGGKGLGKGGAKRHR. Lys-6 is subject to N6-acetyl-N6-methyllysine; alternate. Lys-6, Lys-9, and Lys-13 each carry N6-methyllysine; alternate. Lys-13 carries the N6-acetyl-N6-methyllysine; alternate modification. Residues 17–21 mediate DNA binding; that stretch reads KRHRK. Lys-92 carries the N6-glutaryllysine modification.

Belongs to the histone H4 family. The nucleosome is a histone octamer containing two molecules each of H2A, H2B, H3 and H4 assembled in one H3-H4 heterotetramer and two H2A-H2B heterodimers. The octamer wraps approximately 147 bp of DNA. Glutarylation at Lys-92 (H4K91glu) destabilizes nucleosomes by promoting dissociation of the H2A-H2B dimers from nucleosomes.

It localises to the nucleus. Its subcellular location is the chromosome. In terms of biological role, core component of nucleosome. Nucleosomes wrap and compact DNA into chromatin, limiting DNA accessibility to the cellular machineries which require DNA as a template. Histones thereby play a central role in transcription regulation, DNA repair, DNA replication and chromosomal stability. DNA accessibility is regulated via a complex set of post-translational modifications of histones, also called histone code, and nucleosome remodeling. The sequence is that of Histone H4 (hH4-1) from Neurospora crassa (strain ATCC 24698 / 74-OR23-1A / CBS 708.71 / DSM 1257 / FGSC 987).